The sequence spans 57 residues: Small ribosomal subunit protein bS21 (57 aa).

The interval 24 to 57 is disordered; it reads SKSGTLQESRKREFYEKPSVKRKKKSEAARKRKF. Basic and acidic residues predominate over residues 31-42; sequence ESRKREFYEKPS. Basic residues predominate over residues 43 to 57; that stretch reads VKRKKKSEAARKRKF.

Belongs to the bacterial ribosomal protein bS21 family.

The polypeptide is Small ribosomal subunit protein bS21 (rpsU) (Listeria innocua serovar 6a (strain ATCC BAA-680 / CLIP 11262)).